The chain runs to 67 residues: UPF0337 protein SP_1805 (67 aa).

The interval 1-30 (MSVEEKLNQAKGSIKEGVGKAIGDEKMEKE) is disordered.

Belongs to the UPF0337 (CsbD) family.

The chain is UPF0337 protein SP_1805 from Streptococcus pneumoniae serotype 4 (strain ATCC BAA-334 / TIGR4).